Consider the following 198-residue polypeptide: Thymidine kinase (198 aa).

ATP is bound by residues 9–16 (GTMNSGKS) and 85–88 (DEAQ). Glutamate 86 (proton acceptor) is an active-site residue. Cysteine 143, cysteine 146, cysteine 180, and histidine 183 together coordinate Zn(2+).

Belongs to the thymidine kinase family. In terms of assembly, homotetramer.

The protein resides in the cytoplasm. It carries out the reaction thymidine + ATP = dTMP + ADP + H(+). This is Thymidine kinase from Streptococcus thermophilus (strain ATCC BAA-250 / LMG 18311).